The chain runs to 297 residues: Transcription factor LRL3 (297 aa).

Residues 59–109 are disordered; the sequence is PDQFHHPQESGGPTMGSQEGLQPQGTVSTTSAPVVRQKPRVRARRGQATDP. The segment covering 73–90 has biased composition (polar residues); that stretch reads MGSQEGLQPQGTVSTTSA. A basic motif; degenerate region spans residues 105 to 118; the sequence is QATDPHSIAERLRR. The region spanning 105-154 is the bHLH domain; that stretch reads QATDPHSIAERLRRERIAERMKSLQELVPNTNKTDKASMLDEIIEYVRFL. The tract at residues 119-154 is helix-loop-helix motif; the sequence is ERIAERMKSLQELVPNTNKTDKASMLDEIIEYVRFL.

In terms of assembly, homodimer. As to expression, expressed in trichomes of the root maturation zone. Detected constitutively in flowers.

Its subcellular location is the nucleus. In terms of biological role, transcription factor that regulates the development of root hairs. Does not seem to be involved in the regulation of sperm cell development. In Arabidopsis thaliana (Mouse-ear cress), this protein is Transcription factor LRL3.